Here is a 339-residue protein sequence, read N- to C-terminus: Diguanylate cyclase VdcA (339 aa).

In terms of domain architecture, GGDEF spans 206 to 339 (QQVSLIMLDI…NLGRNRVMPL (134 aa)). A Mg(2+)-binding site is contributed by Asp-214. Positions 222 and 231 each coordinate substrate. Residue Glu-257 coordinates Mg(2+). Glu-257 acts as the Proton acceptor in catalysis.

It depends on Mg(2+) as a cofactor.

The enzyme catalyses 2 GTP = 3',3'-c-di-GMP + 2 diphosphate. It functions in the pathway purine metabolism; 3',5'-cyclic di-GMP biosynthesis. Its function is as follows. Diguanylate cyclase (DGC) that catalyzes the synthesis of cyclic diguanylate (c-di-GMP) via the condensation of 2 GTP molecules. Is involved in the modulation of intracellular c-di-GMP levels. Cyclic-di-GMP is a second messenger which positively regulates biofilm formation and negatively regulates virulence in V.cholerae, and is proposed to play an important role in the transition from persistence in the environment to survival in the host. Overexpression of vdcA results in increased biofilm formation, and reduced motility and virulence. The chain is Diguanylate cyclase VdcA (vdcA) from Vibrio cholerae serotype O1 (strain ATCC 39315 / El Tor Inaba N16961).